The sequence spans 320 residues: uncharacterized protein (320 aa).

This is an uncharacterized protein from Bacillus subtilis (strain 168).